A 330-amino-acid chain; its full sequence is Copper-containing nitrite reductase (330 aa).

Plastocyanin-like domains lie at 1–165 (GLPR…YDRV) and 166–330 (YTIG…PGPA). Cu cation contacts are provided by histidine 85, histidine 90, histidine 125, cysteine 126, histidine 135, methionine 140, and histidine 296.

The protein belongs to the multicopper oxidase family. As to quaternary structure, homotrimer. Cu(2+) is required as a cofactor. Requires Cu(+) as cofactor. The cofactor is FAD.

Its subcellular location is the periplasm. The catalysed reaction is nitric oxide + Fe(III)-[cytochrome c] + H2O = Fe(II)-[cytochrome c] + nitrite + 2 H(+). It functions in the pathway nitrogen metabolism; nitrate reduction (denitrification); dinitrogen from nitrate: step 2/4. In Alcaligenes xylosoxydans xylosoxydans (Achromobacter xylosoxidans), this protein is Copper-containing nitrite reductase (nirK).